The sequence spans 198 residues: Pyridoxal 5'-phosphate synthase subunit PdxT (198 aa).

Position 50–52 (Gly-50–Ser-52) interacts with L-glutamine. Cys-82 serves as the catalytic Nucleophile. L-glutamine-binding positions include Arg-111 and Ile-140–Arg-141. Residues His-177 and Glu-179 each act as charge relay system in the active site.

Belongs to the glutaminase PdxT/SNO family. As to quaternary structure, in the presence of PdxS, forms a dodecamer of heterodimers. Only shows activity in the heterodimer.

It catalyses the reaction aldehydo-D-ribose 5-phosphate + D-glyceraldehyde 3-phosphate + L-glutamine = pyridoxal 5'-phosphate + L-glutamate + phosphate + 3 H2O + H(+). It carries out the reaction L-glutamine + H2O = L-glutamate + NH4(+). It participates in cofactor biosynthesis; pyridoxal 5'-phosphate biosynthesis. In terms of biological role, catalyzes the hydrolysis of glutamine to glutamate and ammonia as part of the biosynthesis of pyridoxal 5'-phosphate. The resulting ammonia molecule is channeled to the active site of PdxS. This chain is Pyridoxal 5'-phosphate synthase subunit PdxT, found in Leifsonia xyli subsp. xyli (strain CTCB07).